The sequence spans 108 residues: NEYQTYLTDRNPQCILNEPLRTDTVSTPVSGNELLEAGKECDCGAPANPCCDAATCKLRPGEQCAEGLCCDQCRFMKEGTICQEAKGDWNDDTCTGQSADCPRNGFYG.

The 19-residue stretch at 1–19 (NEYQTYLTDRNPQCILNEP) folds into the Peptidase M12B domain. Positions 20–35 (LRTDTVSTPVSGNELL) are excised as a propeptide. Positions 27–108 (TPVSGNELLE…ADCPRNGFYG (82 aa)) constitute a Disintegrin domain. 6 cysteine pairs are disulfide-bonded: Cys-41–Cys-56, Cys-43–Cys-51, Cys-50–Cys-73, Cys-64–Cys-70, Cys-69–Cys-94, and Cys-82–Cys-101. The Cell attachment site; atypical (KGD) motif lies at 86–88 (KGD).

Belongs to the venom metalloproteinase (M12B) family. P-II subfamily. P-IIa sub-subfamily. Monomeric (disintegrin). Zn(2+) serves as cofactor. As to expression, expressed by the venom gland.

The protein resides in the secreted. Functionally, impairs hemostasis in the envenomed animal. In terms of biological role, inhibits platelet aggregation induced by ADP, thrombin, platelet-activating factor and collagen. Acts by inhibiting fibrinogen interaction with platelet receptors GPIIb/GPIIIa (ITGA2B/ITGB3). In Gloydius brevicauda (Korean slamosa snake), this protein is Zinc metalloproteinase/disintegrin.